Reading from the N-terminus, the 183-residue chain is ATP synthase subunit delta (183 aa).

It belongs to the ATPase delta chain family. As to quaternary structure, F-type ATPases have 2 components, F(1) - the catalytic core - and F(0) - the membrane proton channel. F(1) has five subunits: alpha(3), beta(3), gamma(1), delta(1), epsilon(1). F(0) has three main subunits: a(1), b(2) and c(10-14). The alpha and beta chains form an alternating ring which encloses part of the gamma chain. F(1) is attached to F(0) by a central stalk formed by the gamma and epsilon chains, while a peripheral stalk is formed by the delta and b chains.

The protein resides in the cell inner membrane. In terms of biological role, f(1)F(0) ATP synthase produces ATP from ADP in the presence of a proton or sodium gradient. F-type ATPases consist of two structural domains, F(1) containing the extramembraneous catalytic core and F(0) containing the membrane proton channel, linked together by a central stalk and a peripheral stalk. During catalysis, ATP synthesis in the catalytic domain of F(1) is coupled via a rotary mechanism of the central stalk subunits to proton translocation. This protein is part of the stalk that links CF(0) to CF(1). It either transmits conformational changes from CF(0) to CF(1) or is implicated in proton conduction. The sequence is that of ATP synthase subunit delta from Vesicomyosocius okutanii subsp. Calyptogena okutanii (strain HA).